We begin with the raw amino-acid sequence, 205 residues long: Glycerol-3-phosphate acyltransferase 1 (205 aa).

The next 5 helical transmembrane spans lie at threonine 7–leucine 27, tryptophan 52–valine 74, histidine 78–phenylalanine 100, leucine 125–phenylalanine 145, and alanine 160–isoleucine 180.

Belongs to the PlsY family. Probably interacts with PlsX.

It localises to the cell membrane. It catalyses the reaction an acyl phosphate + sn-glycerol 3-phosphate = a 1-acyl-sn-glycero-3-phosphate + phosphate. The protein operates within lipid metabolism; phospholipid metabolism. Functionally, catalyzes the transfer of an acyl group from acyl-phosphate (acyl-PO(4)) to glycerol-3-phosphate (G3P) to form lysophosphatidic acid (LPA). This enzyme utilizes acyl-phosphate as fatty acyl donor, but not acyl-CoA or acyl-ACP. The polypeptide is Glycerol-3-phosphate acyltransferase 1 (Lactobacillus acidophilus (strain ATCC 700396 / NCK56 / N2 / NCFM)).